A 403-amino-acid polypeptide reads, in one-letter code: Alkaline protease 1 (403 aa).

A signal peptide spans 1-21 (MQSIKRTLLLLGAVLPAVLAG). Residues 22–121 (PIFPHRRAPT…VEEDQVWHLF (100 aa)) constitute a propeptide that is removed on maturation. Residues 36 to 120 (KYIVTFKSDV…AVEEDQVWHL (85 aa)) enclose the Inhibitor I9 domain. A Peptidase S8 domain is found at 130–403 (PWGLGSISHK…PNLLAYNGNA (274 aa)). Catalysis depends on charge relay system residues Asp162 and His193. Asn253 and Asn309 each carry an N-linked (GlcNAc...) asparagine glycan. Ser349 functions as the Charge relay system in the catalytic mechanism.

It belongs to the peptidase S8 family.

The protein localises to the secreted. The catalysed reaction is Hydrolysis of proteins with broad specificity, and of Bz-Arg-OEt &gt; Ac-Tyr-OEt. Does not hydrolyze peptide amides.. Its function is as follows. Secreted alkaline protease that allows assimilation of proteinaceous substrates. This Aspergillus flavus protein is Alkaline protease 1 (alp1).